The primary structure comprises 151 residues: MFGGAHELSIDSKGRLAVPAKFRDILSRLYTPAVVATLESKHKLLMYPVAEWEKVAAQLLNLKVADNPVLRRFQNLLLHNAEILEWDSAGRVLVPAGLRKRVDFDREVVLVGRANRLELWGREQWEAEMVQALDDDPDELAFQLSQTDLQL.

SpoVT-AbrB domains are found at residues 5-51 (AHEL…PVAE) and 81-124 (AEIL…GREQ).

The protein belongs to the MraZ family. Forms oligomers.

The protein resides in the cytoplasm. The protein localises to the nucleoid. The polypeptide is Transcriptional regulator MraZ (Neisseria gonorrhoeae (strain ATCC 700825 / FA 1090)).